Consider the following 478-residue polypeptide: Putative response regulator NtrX-like (478 aa).

Positions 5-121 constitute a Response regulatory domain; sequence DVLIVDDEED…KLVILLKRAC (117 aa). D54 bears the 4-aspartylphosphate mark. The Sigma-54 factor interaction domain occupies 143-372; that stretch reads LVGNSTITLK…LRNVVEWTLI (230 aa). ATP contacts are provided by residues 171-178 and 235-244; these read GKVGSGKE and ANNGTLYIDE.

Its function is as follows. Member of the two-component regulatory system RBE_0312/RBE_0470. This chain is Putative response regulator NtrX-like, found in Rickettsia bellii (strain RML369-C).